The primary structure comprises 229 residues: Enolase-phosphatase E1 (229 aa).

The segment at 206 to 229 (DRDPASHHPQVQRFDDIHPEQIPA) is disordered. Positions 218-229 (RFDDIHPEQIPA) are enriched in basic and acidic residues.

This sequence belongs to the HAD-like hydrolase superfamily. MasA/MtnC family. As to quaternary structure, monomer. Mg(2+) is required as a cofactor.

It carries out the reaction 5-methylsulfanyl-2,3-dioxopentyl phosphate + H2O = 1,2-dihydroxy-5-(methylsulfanyl)pent-1-en-3-one + phosphate. It functions in the pathway amino-acid biosynthesis; L-methionine biosynthesis via salvage pathway; L-methionine from S-methyl-5-thio-alpha-D-ribose 1-phosphate: step 3/6. Its pathway is amino-acid biosynthesis; L-methionine biosynthesis via salvage pathway; L-methionine from S-methyl-5-thio-alpha-D-ribose 1-phosphate: step 4/6. Bifunctional enzyme that catalyzes the enolization of 2,3-diketo-5-methylthiopentyl-1-phosphate (DK-MTP-1-P) into the intermediate 2-hydroxy-3-keto-5-methylthiopentenyl-1-phosphate (HK-MTPenyl-1-P), which is then dephosphorylated to form the acireductone 1,2-dihydroxy-3-keto-5-methylthiopentene (DHK-MTPene). The polypeptide is Enolase-phosphatase E1 (Klebsiella oxytoca).